Reading from the N-terminus, the 467-residue chain is Gamma-aminobutyric acid receptor subunit gamma-3 (467 aa).

The signal sequence occupies residues 1-17 (MAAKLLLLLCLFSGLHA). At 18-256 (RSRRVEEDEN…FELSRRMGYF (239 aa)) the chain is on the extracellular side. N110 carries an N-linked (GlcNAc...) asparagine glycan. A disulfide bond links C171 and C185. N228 carries an N-linked (GlcNAc...) asparagine glycan. Residues 257-277 (TIQTYIPCILTVVLSWVSFWI) traverse the membrane as a helical segment. Topologically, residues 278–283 (KKDATP) are cytoplasmic. Residues 284-303 (ARTTLGITTVLTMTTLSTIA) form a helical membrane-spanning segment. The Extracellular segment spans residues 304 to 311 (RKSLPRVS). Residues 312 to 332 (YVTAMDLFVTVCFLFVFAALM) traverse the membrane as a helical segment. Over 333–446 (EYATLNYYSS…DVSELDSYSR (114 aa)) the chain is Cytoplasmic. A helical transmembrane segment spans residues 447–467 (VFFPTSFLLFNLVYWVGYLYL).

This sequence belongs to the ligand-gated ion channel (TC 1.A.9) family. Gamma-aminobutyric acid receptor (TC 1.A.9.5) subfamily. GABRG3 sub-subfamily. As to quaternary structure, heteropentamer, formed by a combination of alpha (GABRA1-6), beta (GABRB1-3), gamma (GABRG1-3), delta (GABRD), epsilon (GABRE), rho (GABRR1-3), pi (GABRP) and theta (GABRQ) chains, each subunit exhibiting distinct physiological and pharmacological properties. Post-translationally, may be palmitoylated. In terms of tissue distribution, expressed in brain.

The protein localises to the postsynaptic cell membrane. The protein resides in the cell membrane. The enzyme catalyses chloride(in) = chloride(out). In terms of biological role, gamma subunit of the heteropentameric ligand-gated chloride channel gated by gamma-aminobutyric acid (GABA), a major inhibitory neurotransmitter in the brain. GABA-gated chloride channels, also named GABA(A) receptors (GABAAR), consist of five subunits arranged around a central pore and contain GABA active binding site(s) located at the alpha and beta subunit interface(s). When activated by GABA, GABAARs selectively allow the flow of chloride across the cell membrane down their electrochemical gradient. The protein is Gamma-aminobutyric acid receptor subunit gamma-3 of Mus musculus (Mouse).